The sequence spans 535 residues: Serine/threonine-protein kinase C (535 aa).

In terms of domain architecture, Protein kinase spans 12 to 277; that stretch reads YRIIETLGRG…AMAQTLQGNF (266 aa). Residues 18-26 and K43 each bind ATP; that span reads LGRGGFGET. D142 serves as the catalytic Proton acceptor. The interval 371-535 is disordered; the sequence is NNPPPAVEEP…GEKPIDPEQN (165 aa). Residues 402-421 show a composition bias toward pro residues; it reads SPIPTPATPSPEPTPSPSPS. Residues 422–435 are compositionally biased toward low complexity; sequence PETTSSPTEDTITP. Composition is skewed to pro residues over residues 446-464 and 472-498; these read APIP…PQPS and TPAP…PTPQ.

Belongs to the protein kinase superfamily. Ser/Thr protein kinase family.

The enzyme catalyses L-seryl-[protein] + ATP = O-phospho-L-seryl-[protein] + ADP + H(+). The catalysed reaction is L-threonyl-[protein] + ATP = O-phospho-L-threonyl-[protein] + ADP + H(+). In Synechocystis sp. (strain ATCC 27184 / PCC 6803 / Kazusa), this protein is Serine/threonine-protein kinase C (spkC).